Reading from the N-terminus, the 104-residue chain is Small ribosomal subunit protein uS10 (104 aa).

The protein belongs to the universal ribosomal protein uS10 family. Part of the 30S ribosomal subunit.

Involved in the binding of tRNA to the ribosomes. The polypeptide is Small ribosomal subunit protein uS10 (Hydrogenobaculum sp. (strain Y04AAS1)).